A 460-amino-acid polypeptide reads, in one-letter code: tRNA(Ile)-lysidine synthase (460 aa).

Serine 30–serine 35 is a binding site for ATP.

The protein belongs to the tRNA(Ile)-lysidine synthase family.

It is found in the cytoplasm. It carries out the reaction cytidine(34) in tRNA(Ile2) + L-lysine + ATP = lysidine(34) in tRNA(Ile2) + AMP + diphosphate + H(+). Functionally, ligates lysine onto the cytidine present at position 34 of the AUA codon-specific tRNA(Ile) that contains the anticodon CAU, in an ATP-dependent manner. Cytidine is converted to lysidine, thus changing the amino acid specificity of the tRNA from methionine to isoleucine. The polypeptide is tRNA(Ile)-lysidine synthase (Yersinia pseudotuberculosis serotype I (strain IP32953)).